Reading from the N-terminus, the 276-residue chain is Bifunctional esterase/perhydrolase DCH (276 aa).

The AB hydrolase-1 domain maps to 23–254 (PVIFFHHGWP…NGKLISYPGF (232 aa)). Residues S97, D227, and H256 contribute to the active site.

It belongs to the AB hydrolase superfamily. Bacterial non-heme haloperoxidase / perhydrolase family. As to quaternary structure, homodimer.

The catalysed reaction is 3,4-dihydrocoumarin + H2O = 3-(2-hydroxyphenyl)propanoate + H(+). The enzyme catalyses peracetic acid + H2O = acetate + H2O2 + H(+). It carries out the reaction a percarboxylic acid + H2O = a carboxylate + H2O2 + H(+). With respect to regulation, inhibited by the serine protease inhibitors diisopropyl fluorophosphate and phenylmethanesulfonyl fluoride. Its function is as follows. Multifunctional enzyme, which shows esterase and perhydrolase activities, and is capable of organic acid-assisted bromination of organic compounds. Catalyzes the hydrolysis of 3,4-dihydrocoumarin. Aromatic lactones other than 3,4-dihydrocoumarin, such as 2-coumaranone and homogentisic acid lactone, are also substrates, but their activities relative to that of 3,4-dihydrocoumarin are quite low. Also catalyzes the hydrolysis of several linear esters, with specificity toward methyl esters. In addition, shows perhydrolase activity and catalyzes the dose- and time-dependent degradation of peracetic acid, a broad-spectrum biocide, to acetic acid and hydrogen peroxide. It suggests that in vivo DCH may play a role in the oxidative stress defense system and detoxify peroxoacids in conjunction with the catalase, i.e. peroxoacids are first hydrolyzed to the corresponding acids and hydrogen peroxide by DCH, and then the resulting hydrogen peroxide is degraded by the catalase. Also shows organic acid-assisted bromination activity toward monochlorodimedon when incubated with hydrogen peroxide and dihydrocoumarin or an organic acid, such as acetate and n-butyrate. The sequence is that of Bifunctional esterase/perhydrolase DCH from Acinetobacter calcoaceticus.